A 345-amino-acid chain; its full sequence is Myb/SANT-like DNA-binding domain-containing protein 4 (345 aa).

The 74-residue stretch at 4–77 (LKRKRKSNFS…EVKRRYLDWR (74 aa)) folds into the Myb-like domain. K9 participates in a covalent cross-link: Glycyl lysine isopeptide (Lys-Gly) (interchain with G-Cter in SUMO2). At S106 the chain carries Phosphoserine. Glycyl lysine isopeptide (Lys-Gly) (interchain with G-Cter in SUMO2) cross-links involve residues K114 and K142. The disordered stretch occupies residues 141–175 (VKVEEEERDPQSPEFEIEEEEEMLSSVIPDSRREN). Residue T188 is modified to Phosphothreonine. A coiled-coil region spans residues 202–344 (HLLMNIEKQK…RLRIQKEGHL (143 aa)). Glycyl lysine isopeptide (Lys-Gly) (interchain with G-Cter in SUMO2) cross-links involve residues K237, K254, and K273.

This chain is Myb/SANT-like DNA-binding domain-containing protein 4 (Msantd4), found in Rattus norvegicus (Rat).